Consider the following 914-residue polypeptide: MAENSVLTSTTGRTSLADSSIFDSKVTEISKENLLIGSTSYVEEEMPQIETRVILVQEAGKQEELIKALKTIKIMEVPVIKIKESCPGKSDEKLIKSVINMDIKVGFVKMESVEEFEGLDSPEFENVFVVTDFQDSVFNDLYKADCRVIGPPVVLNCSQKGEPLPFSCRPLYCTSMMNLVLCFTGFRKKEELVRLVTLVHHMGGVIRKDFNSKVTHLVANCTQGEKFRVAVSLGTPIMKPEWIYKAWERRNEQDFYAAVDDFRNEFKVPPFQDCILSFLGFSDEEKTNMEEMTEMQGGKYLPLGDERCTHLVVEENIVKDLPFEPSKKLYVVKQEWFWGSIQMDARAGETMYLYEKANTPELKKSVSMLSLNTPNSNRKRRRLKETLAQLSRETDVSPFPPRKRPSAEHSLSIGSLLDISNTPESSINYGDTPKSCTKSSKSSTPVPSKQSARWQVAKELYQTESNYVNILATIIQLFQVPLEEEGQRGGPILAPEEIKTIFGSIPDIFDVHTKIKDDLEDLIVNWDESKSIGDIFLKYSKDLVKTYPPFVNFFEMSKETIIKCEKQKPRFHAFLKINQAKPECGRQSLVELLIRPVQRLPSVALLLNDLKKHTADENPDKSTLEKAIGSLKEVMTHINEDKRKTEAQKQIFDVVYEVDGCPANLLSSHRSLVQRVETISLGEHPCDRGEQVTLFLFNDCLEIARKRHKVIGTFRSPHGQTRPPASLKHIHLMPLSQIKKVLDIRETEDCHNAFALLVRPPTEQANVLLSFQMTSDELPKENWLKMLCRHVANTICKADAENLIYTADPESFEVNTKDMDSTLSRASRAIKKTSKKVTRAFSFSKTPKRALRRALMTSHGSVEGRSPSSNDKHVMSRLSSTSSLAGIPSPSLVSLPSFFERRSHTLSRSTTHLI.

An N-acetylalanine modification is found at Ala2. 2 consecutive BRCT domains span residues Leu171–Asp260 and Phe266–Tyr354. The residue at position 359 (Thr359) is a Phosphothreonine; by PKC/PRKCI. Phosphoserine occurs at positions 367 and 370. Thr373 carries the post-translational modification Phosphothreonine; by CDK1. At Ser376 the chain carries Phosphoserine. 2 consecutive short sequence motifs (nuclear localization signal) follow at residues Arg378–Arg382 and Pro401–Pro405. Residues Ala388–Lys449 are disordered. The span at Asp418–Tyr429 shows a compositional bias: polar residues. A compositionally biased stretch (low complexity) spans Thr432 to Lys449. Thr444 carries the phosphothreonine; by CDK1 modification. Residues Ala452–Asp641 form the DH domain. Lys611 participates in a covalent cross-link: Glycyl lysine isopeptide (Lys-Gly) (interchain with G-Cter in SUMO2). Residues Arg675–Thr794 form the PH domain. Residues Ser716 and Ser842 each carry the phosphoserine modification. Thr846 carries the post-translational modification Phosphothreonine; by CDK1. Positions Thr857–Leu884 are disordered. Ser861 and Ser866 each carry phosphoserine.

As to quaternary structure, homodimer. Homooligomer. Found in the centralspindlin complex. Interacts with NR1I3. Interacts (Thr-359 phosphorylated form) with PARD6A; the interaction is observed in cancer cells. Interacts (Thr-359 phosphorylated form) with PRKCI; the interaction is observed in cancer cells. Interacts with PKP4; the interaction is observed at the midbody. Interacts with RACGAP1/CYK4; the interaction is direct, occurs in a microtubule-dependent manner, occurs at anaphase and during cytokinesis, is inhibited in metaphase by phosphorylation of ECT2 on Thr-373 and is stimulated in early anaphase by dephosphorylation of ECT2 probably on Thr-373 through CDK1 activity. Interacts with PLK1; the interaction is stimulated upon its phosphorylation on Thr-444. Interacts with RHOA; the interaction results in allosteric activation of ECT2. Interacts with KIF23, PARD3, PARD6B and PRKCQ. Interacts with NEDD9/HEF1. In terms of processing, phosphorylated by PLK1 in vitro. Hyperphosphorylated during the G2 phase of the cell cycle. Phosphorylation at Thr-373 occurs during the G2/M phase, relieves its auto-inhibition status and stimulates its GEF activity. Phosphorylation at Thr-444 in G2/M phase is required for subsequent binding with PLK1 and Rho exchange activation. Dephosphorylated at the time of cytokinesis. Phosphorylation at Thr-359 is required for its transformation activity in cancer cells. In terms of tissue distribution, expressed in lung epithelial cells (at protein level). Expressed in squamous cell carcinoma, primary non-small cell lung cancer tumors and lung adenocarcinoma.

It localises to the nucleus. The protein resides in the cytoplasm. It is found in the cytoskeleton. Its subcellular location is the spindle. The protein localises to the cleavage furrow. It localises to the midbody. The protein resides in the cell junction. It is found in the tight junction. Its subcellular location is the microtubule organizing center. The protein localises to the centrosome. Autoinhibited by the C-terminal PH domain which folds back and binds to the surface of the DH domain, blocking binding of RHOA to the catalytic center of the DH domain. The 2nd BRCT domain is also involved in inhibition, probably by helping to impede RHOA binding. Allosterically activated by binding of activated GTP-bound RHOA to the PH domain which stimulates the release of PH inhibition and promotes the binding of substrate RHOA to the catalytic center. Binding of phosphorylated RACGAP1 to the N-terminal BRCT domain-containing region also releases autoinhibition. In terms of biological role, guanine nucleotide exchange factor (GEF) that catalyzes the exchange of GDP for GTP. Promotes guanine nucleotide exchange on the Rho family members of small GTPases, like RHOA, RHOC, RAC1 and CDC42. Required for signal transduction pathways involved in the regulation of cytokinesis. Component of the centralspindlin complex that serves as a microtubule-dependent and Rho-mediated signaling required for the myosin contractile ring formation during the cell cycle cytokinesis. Regulates the translocation of RHOA from the central spindle to the equatorial region. Plays a role in the control of mitotic spindle assembly; regulates the activation of CDC42 in metaphase for the process of spindle fibers attachment to kinetochores before chromosome congression. Involved in the regulation of epithelial cell polarity; participates in the formation of epithelial tight junctions in a polarity complex PARD3-PARD6-protein kinase PRKCQ-dependent manner. Plays a role in the regulation of neurite outgrowth. Inhibits phenobarbital (PB)-induced NR1I3 nuclear translocation. Stimulates the activity of RAC1 through its association with the oncogenic PARD6A-PRKCI complex in cancer cells, thereby acting to coordinately drive tumor cell proliferation and invasion. Also stimulates genotoxic stress-induced RHOB activity in breast cancer cells leading to their cell death. This Homo sapiens (Human) protein is Protein ECT2.